Consider the following 51-residue polypeptide: Sperm protamine P1 (51 aa).

Belongs to the protamine P1 family. Testis.

It is found in the nucleus. The protein localises to the chromosome. Its function is as follows. Protamines substitute for histones in the chromatin of sperm during the haploid phase of spermatogenesis. They compact sperm DNA into a highly condensed, stable and inactive complex. The polypeptide is Sperm protamine P1 (PRM1) (Colobus guereza (Mantled guereza)).